Reading from the N-terminus, the 158-residue chain is Transcription elongation factor GreA (158 aa).

It belongs to the GreA/GreB family.

In terms of biological role, necessary for efficient RNA polymerase transcription elongation past template-encoded arresting sites. The arresting sites in DNA have the property of trapping a certain fraction of elongating RNA polymerases that pass through, resulting in locked ternary complexes. Cleavage of the nascent transcript by cleavage factors such as GreA or GreB allows the resumption of elongation from the new 3'terminus. GreA releases sequences of 2 to 3 nucleotides. The polypeptide is Transcription elongation factor GreA (Salmonella typhi).